Consider the following 495-residue polypeptide: Glycerol kinase (495 aa).

Thr-11 serves as a coordination point for ADP. ATP is bound by residues Thr-11, Thr-12, and Ser-13. Thr-11 contacts sn-glycerol 3-phosphate. Arg-15 is an ADP binding site. Positions 81, 82, 133, and 242 each coordinate sn-glycerol 3-phosphate. Arg-81, Glu-82, Tyr-133, Asp-242, and Gln-243 together coordinate glycerol. The ADP site is built by Thr-264 and Gly-307. ATP is bound by residues Thr-264, Gly-307, Gln-311, and Gly-408. ADP is bound by residues Gly-408 and Asn-412.

Belongs to the FGGY kinase family.

It carries out the reaction glycerol + ATP = sn-glycerol 3-phosphate + ADP + H(+). It participates in polyol metabolism; glycerol degradation via glycerol kinase pathway; sn-glycerol 3-phosphate from glycerol: step 1/1. Its activity is regulated as follows. Inhibited by fructose 1,6-bisphosphate (FBP). Its function is as follows. Key enzyme in the regulation of glycerol uptake and metabolism. Catalyzes the phosphorylation of glycerol to yield sn-glycerol 3-phosphate. This Alkalilimnicola ehrlichii (strain ATCC BAA-1101 / DSM 17681 / MLHE-1) protein is Glycerol kinase.